Here is a 201-residue protein sequence, read N- to C-terminus: 3-isopropylmalate dehydratase small subunit (201 aa).

Belongs to the LeuD family. LeuD type 1 subfamily. As to quaternary structure, heterodimer of LeuC and LeuD.

The enzyme catalyses (2R,3S)-3-isopropylmalate = (2S)-2-isopropylmalate. It functions in the pathway amino-acid biosynthesis; L-leucine biosynthesis; L-leucine from 3-methyl-2-oxobutanoate: step 2/4. Functionally, catalyzes the isomerization between 2-isopropylmalate and 3-isopropylmalate, via the formation of 2-isopropylmaleate. The sequence is that of 3-isopropylmalate dehydratase small subunit from Kineococcus radiotolerans (strain ATCC BAA-149 / DSM 14245 / SRS30216).